The chain runs to 1235 residues: ATP-dependent helicase/nuclease subunit A (1235 aa).

The 471-residue stretch at 12 to 482 folds into the UvrD-like helicase ATP-binding domain; it reads SLWTDDQWKA…IDLSQNFRSR (471 aa). 33–40 serves as a coordination point for ATP; the sequence is AAAGSGKT. Residues 509–800 form the UvrD-like helicase C-terminal domain; sequence AAELTLGAKS…RMMTIHASKG (292 aa).

Belongs to the helicase family. AddA subfamily. As to quaternary structure, heterodimer of AddA and AddB/RexB. Mg(2+) serves as cofactor.

It catalyses the reaction Couples ATP hydrolysis with the unwinding of duplex DNA by translocating in the 3'-5' direction.. The catalysed reaction is ATP + H2O = ADP + phosphate + H(+). In terms of biological role, the heterodimer acts as both an ATP-dependent DNA helicase and an ATP-dependent, dual-direction single-stranded exonuclease. Recognizes the chi site generating a DNA molecule suitable for the initiation of homologous recombination. The AddA nuclease domain is required for chi fragment generation; this subunit has the helicase and 3' -&gt; 5' nuclease activities. This chain is ATP-dependent helicase/nuclease subunit A, found in Listeria monocytogenes serotype 4a (strain HCC23).